The following is a 352-amino-acid chain: Mas-related G-protein coupled receptor member X2 (352 aa).

The Extracellular portion of the chain corresponds to 1 to 45 (MEERNISGRDLRVDSNITYWGTNITAVNESNHTGMSFCEVVSCTM). N5, N16, N23, N28, and N31 each carry an N-linked (GlcNAc...) asparagine glycan. The chain crosses the membrane as a helical span at residues 46 to 66 (VFLSLIVALVGLVGNATVLWF). Over 67–75 (LGFQMRRNA) the chain is Cytoplasmic. Residues 76-96 (FSVYILNLAGADFLFICFQIG) traverse the membrane as a helical segment. The Extracellular segment spans residues 97–107 (YCFHMILDIDS). Residues 108–128 (IPIEIDLFYLVVLNFPYFCGL) form a helical membrane-spanning segment. Residues 129 to 155 (SILSAISIERCLSVMWPIWYHCQRPRH) lie on the Cytoplasmic side of the membrane. The helical transmembrane segment at 156 to 176 (TSAVICTLLWVLSLVCSLLEG) threads the bilayer. Over 177–195 (KECGFLYYTSDPGWCKTFD) the chain is Extracellular. A helical membrane pass occupies residues 196-216 (LITATWLIVLFVALLGSSLAL). The Cytoplasmic portion of the chain corresponds to 217–239 (VITIFWGLHKIPVTRLYVAIVFT). A helical transmembrane segment spans residues 240-260 (VLVFLLFGLPYGIYWFLLVWI). The Extracellular segment spans residues 261–275 (EKFYYVLPCSIYPVT). The helical transmembrane segment at 276-296 (VFLSCVNSSAKPIIYCLVGSI) threads the bilayer. Residues 297–347 (RHHRFQRKTLKLFLQRAMQDTPEEEECGEMGSSGRSREIKTIWKGLRAALI) are Cytoplasmic-facing.

It belongs to the G-protein coupled receptor 1 family. Mas subfamily.

The protein localises to the cell membrane. Functionally, orphan receptor. Probably involved in the function of nociceptive neurons. May regulate nociceptor function and/or development, including the sensation or modulation of pain. The sequence is that of Mas-related G-protein coupled receptor member X2 (Mrgprx2) from Mus musculus (Mouse).